We begin with the raw amino-acid sequence, 450 residues long: Tubulin beta-3 chain (450 aa).

The GTP site is built by Gln-11, Glu-69, Ser-138, Gly-142, Thr-143, Gly-144, Asn-204, and Asn-226. Residue Glu-69 coordinates Mg(2+). The tract at residues Ser-420 to Tyr-450 is disordered. Over residues Thr-429 to Tyr-450 the composition is skewed to acidic residues.

Belongs to the tubulin family. As to quaternary structure, dimer of alpha and beta chains. A typical microtubule is a hollow water-filled tube with an outer diameter of 25 nm and an inner diameter of 15 nM. Alpha-beta heterodimers associate head-to-tail to form protofilaments running lengthwise along the microtubule wall with the beta-tubulin subunit facing the microtubule plus end conferring a structural polarity. Microtubules usually have 13 protofilaments but different protofilament numbers can be found in some organisms and specialized cells. Mg(2+) is required as a cofactor.

The protein localises to the cytoplasm. The protein resides in the cytoskeleton. In terms of biological role, tubulin is the major constituent of microtubules, a cylinder consisting of laterally associated linear protofilaments composed of alpha- and beta-tubulin heterodimers. Microtubules grow by the addition of GTP-tubulin dimers to the microtubule end, where a stabilizing cap forms. Below the cap, tubulin dimers are in GDP-bound state, owing to GTPase activity of alpha-tubulin. The chain is Tubulin beta-3 chain (TUBB3) from Arabidopsis thaliana (Mouse-ear cress).